A 319-amino-acid polypeptide reads, in one-letter code: Putative GPI-anchor transamidase (319 aa).

The signal sequence occupies residues Met1–Ala16. Residues His156 and Cys198 contribute to the active site. A glycan (N-linked (GlcNAc...) asparagine) is linked at Asn257.

The protein belongs to the peptidase C13 family.

The protein operates within glycolipid biosynthesis; glycosylphosphatidylinositol-anchor biosynthesis. Mediates GPI anchoring in the endoplasmic reticulum, by replacing a protein's C-terminal GPI attachment signal peptide with a pre-assembled GPI. During this transamidation reaction, the GPI transamidase forms a carbonyl intermediate with the substrate protein. The chain is Putative GPI-anchor transamidase from Caenorhabditis elegans.